Here is a 429-residue protein sequence, read N- to C-terminus: ETS domain-containing protein Elk-1 (429 aa).

A DNA-binding region (ETS) is located at residues 5 to 86; sequence VTLWQFLLQL…SGQKFVYKFV (82 aa). Disordered stretches follow at residues 119-146, 165-204, and 227-253; these read HAGPGDTATGKPGTPKGAGMTGQGGLAR, SLQPQPQPPIPPRPASVLPNTTPAGVPAPASGSRSTSPNP, and APNQKSEELSLDPSFGHPQPPEVKVEG. The segment covering 169-178 has biased composition (pro residues); the sequence is QPQPPIPPRP. Residues Lys231, Lys250, and Lys255 each participate in a glycyl lysine isopeptide (Lys-Gly) (interchain with G-Cter in SUMO) cross-link. A compositionally biased stretch (polar residues) spans 302–312; that stretch reads STSTTEITQPQ. Residues 302 to 354 form a disordered region; that stretch reads STSTTEITQPQKGRKPRDLELPLSPSLLGGQGPERTPGSGTSSGLQAPGPALT. Ser325 carries the phosphoserine; by MAPK1 modification. Thr337, Thr354, Thr364, and Thr369 each carry phosphothreonine; by MAPK1. The segment at 350–400 is sufficient for interaction with MAD2L2; that stretch reads GPALTPSLLPTHTLTPVLLTPSSLPPSIHFWSTLSPIAPRSPAKLSFQFPS. O-linked (GlcNAc) threonine glycosylation is present at Thr382. Ser384 carries the post-translational modification Phosphoserine; by MAPK1 and MAPK8. Ser390 carries the phosphoserine; by MAPK1 modification. Thr418 carries the post-translational modification Phosphothreonine; by MAPK1. Phosphoserine; by MAPK1 is present on Ser423.

This sequence belongs to the ETS family. As to quaternary structure, interacts in its sumoylated form with PIAS2/PIASX which enhances its transcriptional activator activity. Interacts with MAD2L2; the interaction is direct and promotes phosphorylation by the kinases MAPK8 and/or MAPK9. Interacts with POU1F1. Sumoylation represses transcriptional activator activity as it results in recruitment of HDAC2 to target gene promoters which leads to decreased histone acetylation and reduced transactivator activity. It also regulates nuclear retention. Post-translationally, on mitogenic stimulation, phosphorylated on C-terminal serine and threonine residues by MAPK1 but also MAPK8 and/or MAPK9. Phosphorylation leads to loss of sumoylation and restores transcriptional activator activity. Phosphorylated and activated by CaMK4, MAPK11, MAPK12 and MAPK14. Upon bFGF stimulus, phosphorylated by PAK1. Phosphorylated by PRP4K at Thr-418; phosphorylation activation ELK1 transcriptional activity. As to expression, predominantly expressed in the brain, and to a lesser extent in the heart, liver and muscle.

It localises to the nucleus. Transcription factor that binds to purine-rich DNA sequences. Forms a ternary complex with SRF and the ETS and SRF motifs of the serum response element (SRE) on the promoter region of immediate early genes such as FOS and IER2. Induces target gene transcription upon JNK and MAPK-signaling pathways stimulation. The chain is ETS domain-containing protein Elk-1 from Mus musculus (Mouse).